A 154-amino-acid chain; its full sequence is Catabolic 3-dehydroquinase (154 aa).

Catalysis depends on Tyr25, which acts as the Proton acceptor. Residues Asn79, His85, and Asp92 each contribute to the substrate site. His105 acts as the Proton donor in catalysis. Substrate contacts are provided by residues 106–107 (IS) and Arg116.

This sequence belongs to the type-II 3-dehydroquinase family. As to quaternary structure, homododecamer. Adopts a ring-like structure, composed of an arrangement of two hexameric rings stacked on top of one another.

It catalyses the reaction 3-dehydroquinate = 3-dehydroshikimate + H2O. The protein operates within aromatic compound metabolism; 3,4-dihydroxybenzoate biosynthesis; 3,4-dihydroxybenzoate from 3-dehydroquinate: step 1/2. Its function is as follows. Is involved in the catabolism of quinate. Allows the utilization of quinate as carbon source via the beta-ketoadipate pathway. In Botryotinia fuckeliana (strain B05.10) (Noble rot fungus), this protein is Catabolic 3-dehydroquinase.